Reading from the N-terminus, the 433-residue chain is MEQIIVHGGNTKLEGTVKIEGAKNAVLPILAATLLAEEGVTTLKNVPILSDVFTMNQVIKHLNVAIDFDEDANEVTIDATQPLGIEANYEYVSKMRASIVVMGPLLARNGHAKVAMPGGCAIGKRPIDLHLKGFQALGAKIIQKNGYIEAIADELIGNTIYLDFPSVGATQNIMMAAVRAKGTTIIENVAREPEIVDLANILNKMGANVIGAGTETMRIEGVDKLHAVEHSIVQDRIEAGTFMVAAAMTEGNVLIEEAISEHNRPLISKLTEMGAIIEEEENGIRVIGPKHLKPTDVKTMPHPGFPTDMQAQMTAIQMFAEGTSIVTETVFENRYQHLEEMRRMNADLKIDGNIAVINGGNELQGAAVEATDLRAAAALILVGLRANGITRVSNLKYLDRGYYEFHKKLQKLGANVERVNDEKIEEKQATTVI.

23–24 (KN) contributes to the phosphoenolpyruvate binding site. Position 96 (Arg-96) interacts with UDP-N-acetyl-alpha-D-glucosamine. Cys-120 functions as the Proton donor in the catalytic mechanism. Cys-120 bears the 2-(S-cysteinyl)pyruvic acid O-phosphothioketal mark. UDP-N-acetyl-alpha-D-glucosamine is bound by residues 125–129 (RPIDL), Asp-308, and Val-330.

The protein belongs to the EPSP synthase family. MurA subfamily.

It localises to the cytoplasm. The catalysed reaction is phosphoenolpyruvate + UDP-N-acetyl-alpha-D-glucosamine = UDP-N-acetyl-3-O-(1-carboxyvinyl)-alpha-D-glucosamine + phosphate. Its pathway is cell wall biogenesis; peptidoglycan biosynthesis. Its function is as follows. Cell wall formation. Adds enolpyruvyl to UDP-N-acetylglucosamine. The chain is UDP-N-acetylglucosamine 1-carboxyvinyltransferase 2 from Enterococcus faecalis (strain ATCC 700802 / V583).